A 426-amino-acid polypeptide reads, in one-letter code: Serine/threonine-protein kinase SRPK (426 aa).

Residues 1-23 are compositionally biased toward basic and acidic residues; it reads MENIFKEKEKGKEKAKEEEKEND. Positions 1–40 are disordered; sequence MENIFKEKEKGKEKAKEEEKENDSGDLFDSEDEGTEDYKK. A compositionally biased stretch (acidic residues) spans 24–35; it reads SGDLFDSEDEGT. A Protein kinase domain is found at 56-419; that stretch reads YRIVKKLGWG…ARDSLEHPYM (364 aa). ATP-binding positions include 62–70 and K86; that span reads LGWGHFSTV. The active-site Proton acceptor is the D188. A Nuclear localization signal motif is present at residues 318 to 328; that stretch reads PKKGDKYDKTD.

The protein belongs to the protein kinase superfamily. CMGC Ser/Thr protein kinase family.

Its subcellular location is the nucleus. The catalysed reaction is L-seryl-[protein] + ATP = O-phospho-L-seryl-[protein] + ADP + H(+). The enzyme catalyses L-threonyl-[protein] + ATP = O-phospho-L-threonyl-[protein] + ADP + H(+). In terms of biological role, phosphorylates serine/arginine-rich protein PSR. This chain is Serine/threonine-protein kinase SRPK, found in Physarum polycephalum (Slime mold).